The chain runs to 101 residues: Trp operon repressor homolog (101 aa).

Residues 59–82 mediate DNA binding; it reads QREIQQNLNTSAATITRGSNMLKL.

This sequence belongs to the TrpR family. Homodimer.

It is found in the cytoplasm. This protein is an aporepressor. When complexed with L-tryptophan it binds the operator region of the trp operon and prevents the initiation of transcription. This chain is Trp operon repressor homolog, found in Mannheimia succiniciproducens (strain KCTC 0769BP / MBEL55E).